The primary structure comprises 319 residues: Annexin A5 (319 aa).

A2 is modified (N-acetylalanine). Annexin repeat units follow at residues F13–K84, P85–Q156, A168–K240, and S244–G315. K27 is covalently cross-linked (Glycyl lysine isopeptide (Lys-Gly) (interchain with G-Cter in SUMO1); alternate). Residue K27 forms a Glycyl lysine isopeptide (Lys-Gly) (interchain with G-Cter in SUMO2); alternate linkage. S35 carries the phosphoserine modification. K68, K74, K77, K95, and K99 each carry N6-acetyllysine. At K288 the chain carries N6-succinyllysine. Positions L312–D318 match the [IL]-x-C-x-x-[DE] motif motif.

The protein belongs to the annexin family. In terms of assembly, monomer. Binds ATRX and EIF5B. In terms of processing, S-nitrosylation is induced by interferon-gamma and oxidatively-modified low-densitity lipoprotein (LDL(ox)) possibly implicating the iNOS-S100A8/9 transnitrosylase complex.

This protein is an anticoagulant protein that acts as an indirect inhibitor of the thromboplastin-specific complex, which is involved in the blood coagulation cascade. This is Annexin A5 (Anxa5) from Mus musculus (Mouse).